We begin with the raw amino-acid sequence, 466 residues long: Glutamate--tRNA ligase (466 aa).

The 'HIGH' region signature appears at 9–19 (PSPTGDLHVGS). The 'KMSKS' region signature appears at 237–241 (KLSKR). Lys-240 is an ATP binding site.

The protein belongs to the class-I aminoacyl-tRNA synthetase family. Glutamate--tRNA ligase type 1 subfamily. Monomer.

It is found in the cytoplasm. The enzyme catalyses tRNA(Glu) + L-glutamate + ATP = L-glutamyl-tRNA(Glu) + AMP + diphosphate. In terms of biological role, catalyzes the attachment of glutamate to tRNA(Glu) in a two-step reaction: glutamate is first activated by ATP to form Glu-AMP and then transferred to the acceptor end of tRNA(Glu). This Baumannia cicadellinicola subsp. Homalodisca coagulata protein is Glutamate--tRNA ligase.